A 410-amino-acid chain; its full sequence is Enterobactin exporter EntS (410 aa).

The Cytoplasmic portion of the chain corresponds to 1 to 21; it reads MNKQSWLLNLSLLKTHPAFRA. Residues 22–42 traverse the membrane as a helical segment; that stretch reads VFLARFISIVSLGLLGVAVPV. At 43-55 the chain is on the periplasmic side; the sequence is QIQMMTHSTWQVG. A helical transmembrane segment spans residues 56-76; it reads LSVTLTGGAMFVGLMVGGVLA. The Cytoplasmic segment spans residues 77-83; that stretch reads DRYERKK. The chain crosses the membrane as a helical span at residues 84 to 104; sequence VILLARGTCGIGFIGLCLNAL. The Periplasmic portion of the chain corresponds to 105-109; the sequence is LPEPS. Residues 110–130 traverse the membrane as a helical segment; the sequence is LLAIYLLGLWDGFFASLGVTA. Topologically, residues 131-156 are cytoplasmic; sequence LLAATSALVGRENLMQAGAITMLTVR. A helical transmembrane segment spans residues 157 to 177; it reads LGSVISPMIGGLLLATGGVAW. Residue N178 is a topological domain, periplasmic. Residues 179–199 traverse the membrane as a helical segment; that stretch reads YGLAAAGTFITLLPLLSLPEL. Residues 200-218 are Cytoplasmic-facing; sequence PPPPQPLEHPLKSLLAGFR. A helical membrane pass occupies residues 219-233; it reads FLLASPLLGGLLTMA. Over 234–250 the chain is Periplasmic; it reads SAVLVLYPALADNWQMS. Residues 251–271 traverse the membrane as a helical segment; that stretch reads AAQIGFLYAAIPLGAAIGALT. Topologically, residues 272-281 are cytoplasmic; it reads SGKLAHSARP. The helical transmembrane segment at 282–301 threads the bilayer; it reads GLLMLLSTLGSFLAIGLFGL. Topologically, residues 302–307 are periplasmic; that stretch reads MPMWIL. The helical transmembrane segment at 308–330 threads the bilayer; it reads GVVCLALFGWLSAVSSLLQYTML. Over 331–350 the chain is Cytoplasmic; sequence QTQTPEAMLGRINGLWTAQN. Residues 351 to 371 form a helical membrane-spanning segment; sequence VTGDAIGAALLGGLGAMMTPV. A372 is a topological domain (periplasmic). The helical transmembrane segment at 373–393 threads the bilayer; that stretch reads SASASGFGLLIIGVLLLLVLV. Over 394–410 the chain is Cytoplasmic; that stretch reads ELRRFRQTPPQVTASDS.

Belongs to the major facilitator superfamily. EntS (TC 2.A.1.38) family.

Its subcellular location is the cell inner membrane. Its function is as follows. Component of an export pathway for enterobactin. The polypeptide is Enterobactin exporter EntS (Shigella flexneri).